The following is a 601-amino-acid chain: Sestrin homolog (601 aa).

The segment covering 1–11 has biased composition (polar residues); sequence MISMGMTSKGQ. The tract at residues 1–58 is disordered; it reads MISMGMTSKGQNVDGAPAGNSSSEWIISSSSSPFQANKRYSLDPPFGSDYSPPASPQN. The N-linked (GlcNAc...) asparagine glycan is linked to Asn-20. A compositionally biased stretch (low complexity) spans 21-32; that stretch reads SSSEWIISSSSS. Residues Asn-322 and Asn-330 are each glycosylated (N-linked (GlcNAc...) asparagine). The tract at residues 355 to 425 is disordered; the sequence is RRSQQQDDDD…DSSSSTLSQS (71 aa). The segment covering 368–379 has biased composition (basic and acidic residues); that stretch reads LHDRQQDFHNAG. Over residues 380 to 425 the composition is skewed to low complexity; sequence DDSQSSNNNTTTTTTTTTTTTTTTNTNTTSNSAGGGDSSSSTLSQS. Residues Asn-387, Asn-388, Asn-406, Asn-438, and Asn-499 are each glycosylated (N-linked (GlcNAc...) asparagine).

It belongs to the sestrin family.

The protein localises to the nucleus. Its subcellular location is the cytoplasm. Functionally, may function as a negative feedback regulator of TOR function. This chain is Sestrin homolog, found in Dictyostelium discoideum (Social amoeba).